The sequence spans 44 residues: Alpha-amylase inhibitor helianthamide (44 aa).

3 disulfide bridges follow: C6–C38, C16–C33, and C20–C39. The inhibitory motif stretch occupies residues 7 to 10 (YIYH).

Belongs to the sea anemone alpha-amylase inhibitor family.

It is found in the secreted. Specific pancreatic alpha-amylase (AMY2A) inhibitor. The recombinant peptide inhibits human pancreatic (Ki=0.01 nM) and porcine pancreatic alpha-amylases (Ki=0.1 nM). In Stichodactyla helianthus (Sun anemone), this protein is Alpha-amylase inhibitor helianthamide.